Here is a 236-residue protein sequence, read N- to C-terminus: Phosphoribosylaminoimidazole-succinocarboxamide synthase (236 aa).

This sequence belongs to the SAICAR synthetase family.

It carries out the reaction 5-amino-1-(5-phospho-D-ribosyl)imidazole-4-carboxylate + L-aspartate + ATP = (2S)-2-[5-amino-1-(5-phospho-beta-D-ribosyl)imidazole-4-carboxamido]succinate + ADP + phosphate + 2 H(+). It participates in purine metabolism; IMP biosynthesis via de novo pathway; 5-amino-1-(5-phospho-D-ribosyl)imidazole-4-carboxamide from 5-amino-1-(5-phospho-D-ribosyl)imidazole-4-carboxylate: step 1/2. This Pseudomonas aeruginosa (strain LESB58) protein is Phosphoribosylaminoimidazole-succinocarboxamide synthase.